Reading from the N-terminus, the 301-residue chain is Probable alpha-L-glutamate ligase 1 (301 aa).

The ATP-grasp domain maps to 104-287 (MQLMSRRGIG…VAGAIIDFVE (184 aa)). Residues K141, 178–179 (EY), D187, and 211–213 (RSN) each bind ATP. The Mg(2+) site is built by D248, E260, and N262. Mn(2+) is bound by residues D248, E260, and N262.

The protein belongs to the RimK family. The cofactor is Mg(2+). Mn(2+) is required as a cofactor.

The sequence is that of Probable alpha-L-glutamate ligase 1 from Shewanella baltica (strain OS185).